Here is a 1567-residue protein sequence, read N- to C-terminus: Putative DEAH-box ATP-dependent helicase UM11114 (1567 aa).

Disordered regions lie at residues 1–95 (MAPR…PGSK) and 670–734 (ESSV…ETRR). The segment covering 10–20 (IKSSGTTSSKA) has biased composition (polar residues). Composition is skewed to low complexity over residues 39-48 (TKAAKQQQTQ) and 55-73 (AISA…AASS). Residues 74–83 (AGGGGGGGQG) show a composition bias toward gly residues. Polar residues-rich tracts occupy residues 670-687 (ESSV…TPTG) and 713-726 (LQRQ…SPSY). The region spanning 746–924 (LGLIRSNRVV…FGKAPCISIP (179 aa)) is the Helicase ATP-binding domain. 759–766 (GETGCGKT) is an ATP binding site. Residues 871-874 (DEVH) carry the DEAH box motif. A Helicase C-terminal domain is found at 1003–1184 (VVRYVVERAE…SLFLEVKSMR (182 aa)).

It belongs to the DEAD box helicase family. DEAH subfamily.

This chain is Putative DEAH-box ATP-dependent helicase UM11114, found in Mycosarcoma maydis (Corn smut fungus).